Here is a 276-residue protein sequence, read N- to C-terminus: NH(3)-dependent NAD(+) synthetase (276 aa).

Position 43 to 50 (43 to 50 (GISGGVDS)) interacts with ATP. Residue aspartate 49 coordinates Mg(2+). Arginine 146 provides a ligand contact to deamido-NAD(+). ATP is bound at residue threonine 166. Glutamate 171 contributes to the Mg(2+) binding site. Deamido-NAD(+) is bound by residues lysine 179 and aspartate 186. The ATP site is built by lysine 195 and threonine 217. 266 to 267 (HK) is a deamido-NAD(+) binding site.

The protein belongs to the NAD synthetase family. As to quaternary structure, homodimer.

The enzyme catalyses deamido-NAD(+) + NH4(+) + ATP = AMP + diphosphate + NAD(+) + H(+). The protein operates within cofactor biosynthesis; NAD(+) biosynthesis; NAD(+) from deamido-NAD(+) (ammonia route): step 1/1. Functionally, catalyzes the ATP-dependent amidation of deamido-NAD to form NAD. Uses ammonia as a nitrogen source. In Shewanella sediminis (strain HAW-EB3), this protein is NH(3)-dependent NAD(+) synthetase.